Reading from the N-terminus, the 905-residue chain is uncharacterized protein (905 aa).

WD repeat units lie at residues 42–82 (RSLK…FQAV), 86–128 (GYAR…SDPK), 136–175 (STLDGVSSVCYKKDTPLLLTGSTSRSVHIIDTRQQLDSVS), and 177–217 (VNTQ…SDNY). Serine 394 and serine 397 each carry phosphoserine.

It belongs to the WD repeat mio family.

This is an uncharacterized protein from Schizosaccharomyces pombe (strain 972 / ATCC 24843) (Fission yeast).